Consider the following 141-residue polypeptide: Nucleoside diphosphate kinase (141 aa).

K11, F59, R87, T93, R104, and N114 together coordinate ATP. The active-site Pros-phosphohistidine intermediate is the H117.

It belongs to the NDK family. Homotetramer. The cofactor is Mg(2+).

The protein localises to the cytoplasm. It catalyses the reaction a 2'-deoxyribonucleoside 5'-diphosphate + ATP = a 2'-deoxyribonucleoside 5'-triphosphate + ADP. The catalysed reaction is a ribonucleoside 5'-diphosphate + ATP = a ribonucleoside 5'-triphosphate + ADP. Major role in the synthesis of nucleoside triphosphates other than ATP. The ATP gamma phosphate is transferred to the NDP beta phosphate via a ping-pong mechanism, using a phosphorylated active-site intermediate. The protein is Nucleoside diphosphate kinase of Ralstonia pickettii (strain 12J).